The chain runs to 161 residues: Nucleotide-binding protein Ajs_2750 (161 aa).

It belongs to the YajQ family.

Functionally, nucleotide-binding protein. The sequence is that of Nucleotide-binding protein Ajs_2750 from Acidovorax sp. (strain JS42).